Reading from the N-terminus, the 599-residue chain is UvrABC system protein C (599 aa).

Residues 18-96 (QLPGVYRMLG…IKQHRPPYNI (79 aa)) form the GIY-YIG domain. The 36-residue stretch at 207 to 242 (KELNQELIAKMEEAAEQLAFEKAMFYRDRLGLLREV) folds into the UVR domain.

It belongs to the UvrC family. As to quaternary structure, interacts with UvrB in an incision complex.

The protein resides in the cytoplasm. Functionally, the UvrABC repair system catalyzes the recognition and processing of DNA lesions. UvrC both incises the 5' and 3' sides of the lesion. The N-terminal half is responsible for the 3' incision and the C-terminal half is responsible for the 5' incision. The chain is UvrABC system protein C from Acinetobacter baylyi (strain ATCC 33305 / BD413 / ADP1).